A 307-amino-acid chain; its full sequence is tRNA dimethylallyltransferase (307 aa).

10 to 17 (GPTASGKS) lines the ATP pocket. 12 to 17 (TASGKS) contributes to the substrate binding site. Interaction with substrate tRNA regions lie at residues 35–38 (DSMQ) and 159–163 (QRLCR).

This sequence belongs to the IPP transferase family. Monomer. The cofactor is Mg(2+).

The enzyme catalyses adenosine(37) in tRNA + dimethylallyl diphosphate = N(6)-dimethylallyladenosine(37) in tRNA + diphosphate. Functionally, catalyzes the transfer of a dimethylallyl group onto the adenine at position 37 in tRNAs that read codons beginning with uridine, leading to the formation of N6-(dimethylallyl)adenosine (i(6)A). This Phenylobacterium zucineum (strain HLK1) protein is tRNA dimethylallyltransferase.